We begin with the raw amino-acid sequence, 99 residues long: Small ribosomal subunit protein uS19c (99 aa).

This sequence belongs to the universal ribosomal protein uS19 family.

The protein resides in the plastid. The protein localises to the chloroplast. Functionally, protein S19 forms a complex with S13 that binds strongly to the 16S ribosomal RNA. The protein is Small ribosomal subunit protein uS19c of Oenothera biennis (German evening primrose).